A 228-amino-acid polypeptide reads, in one-letter code: ATP-dependent dethiobiotin synthetase BioD 1 (228 aa).

ATP is bound at residue 13-18; it reads EVGKTV. Threonine 17 provides a ligand contact to Mg(2+). Residue lysine 38 is part of the active site. Serine 42 is a substrate binding site. ATP-binding positions include aspartate 55, 116–119, 176–177, and 205–207; these read EGAG, ND, and PWL. 2 residues coordinate Mg(2+): aspartate 55 and glutamate 116.

The protein belongs to the dethiobiotin synthetase family. Homodimer. The cofactor is Mg(2+).

The protein resides in the cytoplasm. It catalyses the reaction (7R,8S)-7,8-diammoniononanoate + CO2 + ATP = (4R,5S)-dethiobiotin + ADP + phosphate + 3 H(+). The protein operates within cofactor biosynthesis; biotin biosynthesis; biotin from 7,8-diaminononanoate: step 1/2. Its function is as follows. Catalyzes a mechanistically unusual reaction, the ATP-dependent insertion of CO2 between the N7 and N8 nitrogen atoms of 7,8-diaminopelargonic acid (DAPA, also called 7,8-diammoniononanoate) to form a ureido ring. This is ATP-dependent dethiobiotin synthetase BioD 1 from Salmonella typhimurium (strain LT2 / SGSC1412 / ATCC 700720).